Reading from the N-terminus, the 763-residue chain is U3 small nucleolar RNA-associated protein 25 homolog (763 aa).

Residues 1–164 (MGKRRSRGRS…SQKSSEEFTD (164 aa)) form a disordered region. Promotes p53/TP53 degradation stretches follow at residues 1 to 190 (MGKR…SQRT) and 580 to 642 (VQLP…KKEE). The residue at position 10 (Ser10) is a Phosphoserine. Residues 25–43 (RDFGEEHPFYDRVSKKEVK) are compositionally biased toward basic and acidic residues. Residues Ser52, Ser60, and Ser64 each carry the phosphoserine modification. Residues 54–70 (DSSHSESESESEQEHVS) are compositionally biased toward basic and acidic residues. Acidic residues predominate over residues 84–119 (EEEEEEEEEEEEEEEDKEEVDDSAVGDSEMNGEDGG). The tract at residues 643–704 (LNFTHICEYT…YELPTYAHFY (62 aa)) is represses p53/TP53 degradation.

The protein belongs to the UTP25 family. Interacts with CAPN3; the interaction is required for CAPN3 translocation to the nucleolus. In terms of processing, phosphorylated. Phosphorylation is required to promote p53/TP53 degradation in the nucleolus which promotes cell cycle progression and liver development.

Its subcellular location is the nucleus. The protein localises to the nucleolus. Component of the ribosomal small subunit processome for the biogenesis of ribosomes, functions in pre-ribosomal RNA (pre-rRNA) processing. Essential for embryonic development in part through the regulation of p53 pathway. Controls the expansion growth of digestive organs and liver. Also involved in the sympathetic neuronal development. Mediates, with CAPN3, the proteasome-independent degradation of p53/TP53. The protein is U3 small nucleolar RNA-associated protein 25 homolog of Rattus norvegicus (Rat).